Reading from the N-terminus, the 203-residue chain is ER membrane protein complex subunit 8/9 homolog (203 aa).

One can recognise an MPN domain in the interval tyrosine 4–serine 140.

This sequence belongs to the EMC8/EMC9 family. As to quaternary structure, component of the ER membrane protein complex (EMC).

The protein localises to the endoplasmic reticulum membrane. Its function is as follows. Part of the endoplasmic reticulum membrane protein complex (EMC) that enables the energy-independent insertion into endoplasmic reticulum membranes of newly synthesized multi-pass membrane proteins like rhodopsins. The polypeptide is ER membrane protein complex subunit 8/9 homolog (Drosophila melanogaster (Fruit fly)).